The primary structure comprises 212 residues: Thymidylate kinase (212 aa).

10–17 (GPEGAGKT) lines the ATP pocket.

This sequence belongs to the thymidylate kinase family.

It catalyses the reaction dTMP + ATP = dTDP + ADP. Its function is as follows. Phosphorylation of dTMP to form dTDP in both de novo and salvage pathways of dTTP synthesis. The polypeptide is Thymidylate kinase (Bacillus velezensis (strain DSM 23117 / BGSC 10A6 / LMG 26770 / FZB42) (Bacillus amyloliquefaciens subsp. plantarum)).